A 498-amino-acid chain; its full sequence is MRPPACWWLLAPPALLALLTCSLAFGLASEDTKKEVKQSQDLEKSGISRKNDIDLKGIVFVIQSQSNSFHAKRAEQLKKSILKQAADLTQELPSVLLLHQLAKQEGAWTILPLLPHFSVTYSRNSSWIFFCEEETRIQIPKLLETLRRYDPSKEWFLGKALHDEEATIIHHYAFSENPTVFKYPDFAAGWALSIPLVNKLTKRLKSESLKSDFTIDLKHEIALYIWDKGGGPPLTPVPEFCTNDVDFYCATTFHSFLPLCRKPVKKKDIFVAVKTCKKFHGDRIPIVKQTWESQASLIEYYSDYTENSIPTVDLGIPNTDRGHCGKTFAILERFLNRSQDKTAWLVIVDDDTLISISRLQHLLSCYDSGEPVFLGERYGYGLGTGGYSYITGGGGMVFSREAVRRLLASKCRCYSNDAPDDMVLGMCFSGLGIPVTHSPLFHQARPVDYPKDYLSHQVPISFHKHWNIDPVKVYFTWLAPSDEDKARQETQKGFREEL.

Residues 1-6 (MRPPAC) lie on the Cytoplasmic side of the membrane. A helical; Signal-anchor for type II membrane protein transmembrane segment spans residues 7–27 (WWLLAPPALLALLTCSLAFGL). Residues 28–498 (ASEDTKKEVK…ETQKGFREEL (471 aa)) lie on the Lumenal side of the membrane. Residue Asn336 is glycosylated (N-linked (GlcNAc...) asparagine). Positions 495–498 (REEL) match the Prevents secretion from ER motif.

The protein belongs to the glycosyltransferase 31 family. In terms of tissue distribution, widely expressed, with highest levels in testis and uterus.

It localises to the endoplasmic reticulum membrane. Its pathway is protein modification; protein glycosylation. In terms of biological role, O-glucosyltransferase that transfers glucose toward fucose with a beta-1,3 linkage. Specifically glucosylates O-linked fucosylglycan on TSP type-1 domains of proteins, thereby contributing to elongation of O-fucosylglycan. In Homo sapiens (Human), this protein is Beta-1,3-glucosyltransferase.